Consider the following 275-residue polypeptide: Ribosomal RNA small subunit methyltransferase A (275 aa).

Residues asparagine 21, leucine 23, glycine 48, glutamate 69, aspartate 94, and asparagine 115 each contribute to the S-adenosyl-L-methionine site.

This sequence belongs to the class I-like SAM-binding methyltransferase superfamily. rRNA adenine N(6)-methyltransferase family. RsmA subfamily.

It localises to the cytoplasm. The catalysed reaction is adenosine(1518)/adenosine(1519) in 16S rRNA + 4 S-adenosyl-L-methionine = N(6)-dimethyladenosine(1518)/N(6)-dimethyladenosine(1519) in 16S rRNA + 4 S-adenosyl-L-homocysteine + 4 H(+). Functionally, specifically dimethylates two adjacent adenosines (A1518 and A1519) in the loop of a conserved hairpin near the 3'-end of 16S rRNA in the 30S particle. May play a critical role in biogenesis of 30S subunits. The sequence is that of Ribosomal RNA small subunit methyltransferase A from Clostridium botulinum (strain ATCC 19397 / Type A).